Consider the following 837-residue polypeptide: Anaphase-promoting complex subunit 4 (837 aa).

2 stretches are compositionally biased toward low complexity: residues 59 to 81 (NDNN…NDNN) and 547 to 581 (SSSS…NNNN). Disordered regions lie at residues 59–89 (NDNN…KSNK) and 547–588 (SSSS…QSGN).

It belongs to the APC4 family. The APC/C is composed of at least 13 subunits that stay tightly associated throughout the cell cycle: anapc1, anapc2, anapc3, anapc4, anapc5, anapc6, anapc7, anapc8, anapc10, anapc11, cdc20, cdc26 and cdh1.

Its subcellular location is the nucleus. The protein operates within protein modification; protein ubiquitination. Functionally, component of the anaphase promoting complex/cyclosome (APC/C), a cell cycle-regulated E3 ubiquitin-protein ligase complex that controls progression through mitosis and the G1 phase of the cell cycle. In Dictyostelium discoideum (Social amoeba), this protein is Anaphase-promoting complex subunit 4 (anapc4).